A 462-amino-acid polypeptide reads, in one-letter code: Beta-glucosidase 1A (462 aa).

Substrate is bound by residues glutamine 20, histidine 123, and asparagine 169. The active-site Proton donor is the glutamate 170. Substrate is bound at residue tyrosine 301. Residue glutamate 365 is the Nucleophile of the active site. Substrate is bound by residues tryptophan 415 and 422 to 423 (EW).

Belongs to the glycosyl hydrolase 1 family.

The catalysed reaction is Hydrolysis of terminal, non-reducing beta-D-glucosyl residues with release of beta-D-glucose.. Functionally, plays an important role in cellulose degradation. Shows hydrolytic activity against several glycosidic compounds. The sequence is that of Beta-glucosidase 1A from Phanerodontia chrysosporium (White-rot fungus).